Here is a 308-residue protein sequence, read N- to C-terminus: tRNA pseudouridine synthase B (308 aa).

Asp47 (nucleophile) is an active-site residue.

It belongs to the pseudouridine synthase TruB family. Type 1 subfamily.

It carries out the reaction uridine(55) in tRNA = pseudouridine(55) in tRNA. Functionally, responsible for synthesis of pseudouridine from uracil-55 in the psi GC loop of transfer RNAs. The polypeptide is tRNA pseudouridine synthase B (Xanthomonas campestris pv. campestris (strain B100)).